The chain runs to 103 residues: Large ribosomal subunit protein bL21 (103 aa).

Belongs to the bacterial ribosomal protein bL21 family. As to quaternary structure, part of the 50S ribosomal subunit. Contacts protein L20.

In terms of biological role, this protein binds to 23S rRNA in the presence of protein L20. The sequence is that of Large ribosomal subunit protein bL21 from Shewanella denitrificans (strain OS217 / ATCC BAA-1090 / DSM 15013).